Reading from the N-terminus, the 1486-residue chain is Protein PRRC2B (1486 aa).

Disordered regions lie at residues M1 to T20, V39 to P306, Q320 to Q341, K385 to E519, and L531 to Y658. The segment covering A88–V137 has biased composition (polar residues). 4 positions are modified to phosphoserine: S166, S168, S222, and S226. Residues S219–A235 show a composition bias toward polar residues. A Phosphothreonine modification is found at T228. Residue K251 forms a Glycyl lysine isopeptide (Lys-Gly) (interchain with G-Cter in SUMO2) linkage. A compositionally biased stretch (polar residues) spans S288–R300. Phosphoserine is present on residues S387 and S415. 3 stretches are compositionally biased toward basic and acidic residues: residues T422–D433, H478–P488, and A501–E519. S479 is subject to Phosphoserine. Positions I494–T544 form a coiled coil. Phosphoserine is present on S555. Over residues S600–S611 the composition is skewed to low complexity. S621 is subject to Phosphoserine. Over residues Q638–Q656 the composition is skewed to low complexity. A Glycyl lysine isopeptide (Lys-Gly) (interchain with G-Cter in SUMO2) cross-link involves residue K751. T753 is modified (phosphothreonine). 2 positions are modified to phosphoserine: S762 and S793. Disordered regions lie at residues R792–K847, E893–R918, and A950–V1080. Residues I880–V904 are a coiled coil. Polar residues predominate over residues S960–D986. A compositionally biased stretch (low complexity) spans S998–S1007. 2 stretches are compositionally biased toward basic and acidic residues: residues S1025–P1055 and R1062–E1074. S1070 and S1159 each carry phosphoserine. 3 disordered regions span residues K1177 to G1205, Q1410 to E1443, and A1455 to P1486. The span at N1181–P1191 shows a compositional bias: polar residues. Residues Q1410–S1421 are compositionally biased toward low complexity. A compositionally biased stretch (polar residues) spans S1457 to R1474.

This Mus musculus (Mouse) protein is Protein PRRC2B (Prrc2b).